The sequence spans 709 residues: Threonine--tRNA ligase, mitochondrial 1 (709 aa).

The N-terminal 21 residues, 1–21 (MLLRLTARSIRRFTTSSSSLP), are a transit peptide targeting the mitochondrion. Positions 73–135 (DPIKVTLPDG…EGDCKLELFK (63 aa)) constitute a TGS domain. Zn(2+)-binding residues include Cys-407, His-458, and His-584.

It belongs to the class-II aminoacyl-tRNA synthetase family.

Its subcellular location is the mitochondrion. It localises to the cytoplasm. The protein localises to the cytosol. It carries out the reaction tRNA(Thr) + L-threonine + ATP = L-threonyl-tRNA(Thr) + AMP + diphosphate + H(+). The protein is Threonine--tRNA ligase, mitochondrial 1 of Arabidopsis thaliana (Mouse-ear cress).